The following is a 432-amino-acid chain: Adenylosuccinate synthetase (432 aa).

Residues 13–19 and 41–43 contribute to the GTP site; these read GDEGKGK and GHT. Residue Asp-14 is the Proton acceptor of the active site. 2 residues coordinate Mg(2+): Asp-14 and Gly-41. IMP contacts are provided by residues 14-17, 39-42, Thr-130, Arg-144, Gln-225, Thr-240, and Arg-304; these read DEGK and NAGH. His-42 serves as the catalytic Proton donor. Residue 300-306 coordinates substrate; sequence ATTGRKR. GTP contacts are provided by residues Arg-306, 332–334, and 415–417; these read KLD and STG.

This sequence belongs to the adenylosuccinate synthetase family. Homodimer. Mg(2+) serves as cofactor.

The protein resides in the cytoplasm. It carries out the reaction IMP + L-aspartate + GTP = N(6)-(1,2-dicarboxyethyl)-AMP + GDP + phosphate + 2 H(+). It participates in purine metabolism; AMP biosynthesis via de novo pathway; AMP from IMP: step 1/2. Functionally, plays an important role in the de novo pathway of purine nucleotide biosynthesis. Catalyzes the first committed step in the biosynthesis of AMP from IMP. The chain is Adenylosuccinate synthetase from Alteromonas mediterranea (strain DSM 17117 / CIP 110805 / LMG 28347 / Deep ecotype).